Reading from the N-terminus, the 92-residue chain is Small ribosomal subunit protein uS17 (92 aa).

This sequence belongs to the universal ribosomal protein uS17 family. In terms of assembly, part of the 30S ribosomal subunit.

In terms of biological role, one of the primary rRNA binding proteins, it binds specifically to the 5'-end of 16S ribosomal RNA. This chain is Small ribosomal subunit protein uS17, found in Wigglesworthia glossinidia brevipalpis.